Reading from the N-terminus, the 341-residue chain is S-adenosylmethionine:tRNA ribosyltransferase-isomerase (341 aa).

The protein belongs to the QueA family. In terms of assembly, monomer.

It localises to the cytoplasm. It carries out the reaction 7-aminomethyl-7-carbaguanosine(34) in tRNA + S-adenosyl-L-methionine = epoxyqueuosine(34) in tRNA + adenine + L-methionine + 2 H(+). Its pathway is tRNA modification; tRNA-queuosine biosynthesis. Its function is as follows. Transfers and isomerizes the ribose moiety from AdoMet to the 7-aminomethyl group of 7-deazaguanine (preQ1-tRNA) to give epoxyqueuosine (oQ-tRNA). This chain is S-adenosylmethionine:tRNA ribosyltransferase-isomerase, found in Herminiimonas arsenicoxydans.